A 177-amino-acid polypeptide reads, in one-letter code: Large ribosomal subunit protein uL6 (177 aa).

This sequence belongs to the universal ribosomal protein uL6 family. As to quaternary structure, part of the 50S ribosomal subunit.

Its function is as follows. This protein binds to the 23S rRNA, and is important in its secondary structure. It is located near the subunit interface in the base of the L7/L12 stalk, and near the tRNA binding site of the peptidyltransferase center. The chain is Large ribosomal subunit protein uL6 from Ralstonia pickettii (strain 12J).